We begin with the raw amino-acid sequence, 78 residues long: Large ribosomal subunit protein eL20 (78 aa).

This sequence belongs to the eukaryotic ribosomal protein eL20 family. Part of the 50S ribosomal subunit. Binds 23S rRNA.

This Methanothermobacter thermautotrophicus (strain ATCC 29096 / DSM 1053 / JCM 10044 / NBRC 100330 / Delta H) (Methanobacterium thermoautotrophicum) protein is Large ribosomal subunit protein eL20.